The following is a 635-amino-acid chain: Extracellular metalloproteinase 1 (635 aa).

Positions 1–19 (MHGLLLAAGLLSLPLHVLA) are cleaved as a signal peptide. Positions 20 to 246 (HPQPSTSTSL…VHNVVDYVAH (227 aa)) are excised as a propeptide. A glycan (N-linked (GlcNAc...) asparagine) is linked at asparagine 287. Histidine 430 is a binding site for Zn(2+). Glutamate 431 is an active-site residue. Residue histidine 434 coordinates Zn(2+). 3 N-linked (GlcNAc...) asparagine glycosylation sites follow: asparagine 475, asparagine 594, and asparagine 623.

This sequence belongs to the peptidase M36 family. Zn(2+) serves as cofactor.

It is found in the secreted. Its function is as follows. Secreted metalloproteinase probably acting as a virulence factor. This chain is Extracellular metalloproteinase 1 (MEP1), found in Trichophyton tonsurans (Scalp ringworm fungus).